Reading from the N-terminus, the 243-residue chain is Pyridoxine 5'-phosphate synthase (243 aa).

Asparagine 9 serves as a coordination point for 3-amino-2-oxopropyl phosphate. 11–12 (DH) contacts 1-deoxy-D-xylulose 5-phosphate. Residue arginine 20 participates in 3-amino-2-oxopropyl phosphate binding. Catalysis depends on histidine 45, which acts as the Proton acceptor. 1-deoxy-D-xylulose 5-phosphate-binding residues include arginine 47 and histidine 52. The active-site Proton acceptor is the glutamate 72. Threonine 102 contributes to the 1-deoxy-D-xylulose 5-phosphate binding site. Histidine 193 functions as the Proton donor in the catalytic mechanism. Residues glycine 194 and 215–216 (GH) contribute to the 3-amino-2-oxopropyl phosphate site.

This sequence belongs to the PNP synthase family. As to quaternary structure, homooctamer; tetramer of dimers.

The protein localises to the cytoplasm. It carries out the reaction 3-amino-2-oxopropyl phosphate + 1-deoxy-D-xylulose 5-phosphate = pyridoxine 5'-phosphate + phosphate + 2 H2O + H(+). It participates in cofactor biosynthesis; pyridoxine 5'-phosphate biosynthesis; pyridoxine 5'-phosphate from D-erythrose 4-phosphate: step 5/5. Catalyzes the complicated ring closure reaction between the two acyclic compounds 1-deoxy-D-xylulose-5-phosphate (DXP) and 3-amino-2-oxopropyl phosphate (1-amino-acetone-3-phosphate or AAP) to form pyridoxine 5'-phosphate (PNP) and inorganic phosphate. This is Pyridoxine 5'-phosphate synthase from Vibrio parahaemolyticus serotype O3:K6 (strain RIMD 2210633).